The primary structure comprises 316 residues: Cyclin-dependent kinase inhibitor 1C (316 aa).

R107 bears the Omega-N-methylarginine mark. Positions 124-153 (ESLDGLEEAPEQLPSVPVPAPASTPPPVPV) are disordered. Residues 139-153 (VPVPAPASTPPPVPV) are compositionally biased toward pro residues. Tandem repeats lie at residues 156 to 159 (PAPA), 160 to 163 (PAPA), 180 to 183 (PAPA), 184 to 187 (PAPA), 188 to 191 (PAPA), 198 to 201 (PAPA), 202 to 205 (PAPA), 206 to 209 (PAPA), and 210 to 213 (PAPA). Positions 156-213 (PAPAPAPAPVAAPVAAPVAVAVLAPAPAPAPAPAPAPAPVAAPAPAPAPAPAPAPAPA) are 9 X 4 AA repeats of P-A-P-A. Pro residues predominate over residues 181 to 217 (APAPAPAPAPAPAPVAAPAPAPAPAPAPAPAPAPAPD). The disordered stretch occupies residues 181–260 (APAPAPAPAP…AAGTAAASAN (80 aa)). The span at 223–233 (SAEQGANQGQR) shows a compositional bias: polar residues. The segment covering 251–260 (AAGTAAASAN) has biased composition (low complexity). Phosphoserine is present on S268. The Nuclear localization signal signature appears at 278-281 (KRKR). The disordered stretch occupies residues 278 to 316 (KRKRSAPEKSSGDVPAPCPSPSAAPGVGSVEQTPRKRLR).

This sequence belongs to the CDI family. As to quaternary structure, interacts with PCNA. As to expression, expressed in the heart, brain, lung, skeletal muscle, kidney, pancreas and testis. Expressed in the eye. High levels are seen in the placenta while low levels are seen in the liver.

It is found in the nucleus. Potent tight-binding inhibitor of several G1 cyclin/CDK complexes (cyclin E-CDK2, cyclin D2-CDK4, and cyclin A-CDK2) and, to lesser extent, of the mitotic cyclin B-CDC2. Negative regulator of cell proliferation. May play a role in maintenance of the non-proliferative state throughout life. The protein is Cyclin-dependent kinase inhibitor 1C (CDKN1C) of Homo sapiens (Human).